A 623-amino-acid chain; its full sequence is Endoglucanase 7 (623 aa).

Residues 1–79 (MHPGNVWGGS…LGCVSVSRTV (79 aa)) are Cytoplasmic-facing. Residues 80-100 (FLWTVGSIAVLFLVVALPIII) traverse the membrane as a helical; Signal-anchor for type II membrane protein segment. The Extracellular portion of the chain corresponds to 101–623 (VKSLPRHKSA…TPPPPKAWKP (523 aa)). N-linked (GlcNAc...) asparagine glycosylation is found at Asn-116, Asn-221, Asn-328, Asn-349, Asn-412, Asn-429, and Asn-464. His-517 is an active-site residue. Asn-548 carries an N-linked (GlcNAc...) asparagine glycan. Residue Asp-565 is part of the active site. N-linked (GlcNAc...) asparagine glycosylation occurs at Asn-571. Glu-574 is an active-site residue.

The protein belongs to the glycosyl hydrolase 9 (cellulase E) family. In terms of tissue distribution, expressed in basal region of leaf blade and proximal parts of leaf and floral organ.

It localises to the membrane. It carries out the reaction Endohydrolysis of (1-&gt;4)-beta-D-glucosidic linkages in cellulose, lichenin and cereal beta-D-glucans.. This is Endoglucanase 7 (KOR2) from Arabidopsis thaliana (Mouse-ear cress).